The sequence spans 723 residues: Polyribonucleotide nucleotidyltransferase (723 aa).

2 residues coordinate Mg(2+): Asp-488 and Asp-494. The 60-residue stretch at 555–614 folds into the KH domain; it reads PRMITMKIHPDKIREVIGKGGSTIQALTKETGTTIDIQEDGTITIASTSTDGMAEAKRRI. The S1 motif domain occupies 624–692; it reads GKIYAGTVLK…EKGRLRLSLK (69 aa). Positions 701–723 are disordered; the sequence is SISPINAGEAAAPAAPAEGSEQQ. Residues 707 to 723 are compositionally biased toward low complexity; the sequence is AGEAAAPAAPAEGSEQQ.

It belongs to the polyribonucleotide nucleotidyltransferase family. The cofactor is Mg(2+).

The protein localises to the cytoplasm. It carries out the reaction RNA(n+1) + phosphate = RNA(n) + a ribonucleoside 5'-diphosphate. In terms of biological role, involved in mRNA degradation. Catalyzes the phosphorolysis of single-stranded polyribonucleotides processively in the 3'- to 5'-direction. In Cupriavidus necator (strain ATCC 17699 / DSM 428 / KCTC 22496 / NCIMB 10442 / H16 / Stanier 337) (Ralstonia eutropha), this protein is Polyribonucleotide nucleotidyltransferase.